The primary structure comprises 244 residues: Maintenance of ploidy protein mob2 (244 aa).

Positions 14 to 45 (NRSKRHQNLSDASSSSGSFSKKSSTSQLVRTG) are disordered. A compositionally biased stretch (low complexity) spans 23–39 (SDASSSSGSFSKKSSTS). A phosphoserine mark is found at S46 and S48.

The protein belongs to the MOB1/phocein family. As to quaternary structure, interacts with orb6.

Its subcellular location is the cytoplasm. The protein localises to the cell cortex. Functionally, required for coordinating polarized cell growth during interphase with the onset of mitosis. The chain is Maintenance of ploidy protein mob2 (mob2) from Schizosaccharomyces pombe (strain 972 / ATCC 24843) (Fission yeast).